Reading from the N-terminus, the 477-residue chain is Bifunctional protein HldE (477 aa).

The interval 1 to 318 (MKVTLPEFER…ENAVRGRAET (318 aa)) is ribokinase. 195 to 198 (NLSE) contacts ATP. Residue aspartate 264 is part of the active site. The segment at 344–477 (MTNGVFDILH…IKKIQKDSDK (134 aa)) is cytidylyltransferase.

In the N-terminal section; belongs to the carbohydrate kinase PfkB family. This sequence in the C-terminal section; belongs to the cytidylyltransferase family. In terms of assembly, homodimer.

It catalyses the reaction D-glycero-beta-D-manno-heptose 7-phosphate + ATP = D-glycero-beta-D-manno-heptose 1,7-bisphosphate + ADP + H(+). The catalysed reaction is D-glycero-beta-D-manno-heptose 1-phosphate + ATP + H(+) = ADP-D-glycero-beta-D-manno-heptose + diphosphate. It functions in the pathway nucleotide-sugar biosynthesis; ADP-L-glycero-beta-D-manno-heptose biosynthesis; ADP-L-glycero-beta-D-manno-heptose from D-glycero-beta-D-manno-heptose 7-phosphate: step 1/4. Its pathway is nucleotide-sugar biosynthesis; ADP-L-glycero-beta-D-manno-heptose biosynthesis; ADP-L-glycero-beta-D-manno-heptose from D-glycero-beta-D-manno-heptose 7-phosphate: step 3/4. In terms of biological role, catalyzes the phosphorylation of D-glycero-D-manno-heptose 7-phosphate at the C-1 position to selectively form D-glycero-beta-D-manno-heptose-1,7-bisphosphate. Catalyzes the ADP transfer from ATP to D-glycero-beta-D-manno-heptose 1-phosphate, yielding ADP-D-glycero-beta-D-manno-heptose. In Klebsiella pneumoniae subsp. pneumoniae (strain ATCC 700721 / MGH 78578), this protein is Bifunctional protein HldE.